Reading from the N-terminus, the 138-residue chain is Cysteine desulfuration protein SufE (138 aa).

The active-site Cysteine persulfide intermediate is the cysteine 51.

The protein belongs to the SufE family. In terms of assembly, homodimer. Interacts with SufS.

The protein resides in the cytoplasm. It functions in the pathway cofactor biosynthesis; iron-sulfur cluster biosynthesis. Functionally, participates in cysteine desulfuration mediated by SufS. Cysteine desulfuration mobilizes sulfur from L-cysteine to yield L-alanine and constitutes an essential step in sulfur metabolism for biosynthesis of a variety of sulfur-containing biomolecules. Functions as a sulfur acceptor for SufS, by mediating the direct transfer of the sulfur atom from the S-sulfanylcysteine of SufS, an intermediate product of cysteine desulfuration process. The chain is Cysteine desulfuration protein SufE from Escherichia coli O157:H7.